Reading from the N-terminus, the 331-residue chain is 6-phosphogluconolactonase (331 aa).

At K287 the chain carries N6-acetyllysine.

This sequence belongs to the cycloisomerase 2 family.

It catalyses the reaction 6-phospho-D-glucono-1,5-lactone + H2O = 6-phospho-D-gluconate + H(+). The protein operates within carbohydrate degradation; pentose phosphate pathway; D-ribulose 5-phosphate from D-glucose 6-phosphate (oxidative stage): step 2/3. In terms of biological role, catalyzes the hydrolysis of 6-phosphogluconolactone to 6-phosphogluconate. The chain is 6-phosphogluconolactonase from Shigella boydii serotype 18 (strain CDC 3083-94 / BS512).